The following is a 567-amino-acid chain: Pyrethroid hydrolase Ces2e (567 aa).

An N-terminal signal peptide occupies residues 1–36; sequence MAQTRAWKSIMPLESLPGWLNAVVWGLLLLFCQVQG. A Pyrrolidone carboxylic acid modification is found at Gln-37. Residues Cys-105 and Cys-132 are joined by a disulfide bond. The active-site Acyl-ester intermediate is Ser-237. Cys-289 and Cys-300 are joined by a disulfide. Active-site charge relay system residues include Glu-354 and His-465.

The protein belongs to the type-B carboxylesterase/lipase family. In terms of tissue distribution, expressed in liver.

The protein resides in the microsome. The catalysed reaction is all-trans-retinyl hexadecanoate + H2O = all-trans-retinol + hexadecanoate + H(+). It carries out the reaction (-)-trans-permethrin + H2O = (3-phenoxyphenyl)methanol + (1S,3R)-3-(2,2-dichlorovinyl)-2,2-dimethylcyclopropanecarboxylate + H(+). Carboxylesterase that catalyzes the hydrolysis of pyrethroids pesticides. Hydrolyzes trans-permethrin at a rate about 22-fold higher than cis-permethrin. Also hydrolyzes trans-cypermethrin. Hydrolyzes retinyl esters. The sequence is that of Pyrethroid hydrolase Ces2e from Rattus norvegicus (Rat).